A 23-amino-acid chain; its full sequence is IIGDTINGAITTADNIAGKIGII.

As to expression, expressed in skin glands.

Its subcellular location is the secreted. Its function is as follows. May act as an antimicrobial peptide. The sequence is that of Septenin 2 from Osteopilus septentrionalis (Cuban treefrog).